Consider the following 616-residue polypeptide: Chaperone protein HtpG (616 aa).

Residues 1–334 are a; substrate-binding; the sequence is MTIKQTHSFQ…TADLSLNLSR (334 aa). Positions 335–549 are b; sequence EILQDNKVIK…ENEMGGNMER (215 aa). The c stretch occupies residues 550–616; that stretch reads IMKSLGQDIP…FVKRINKLIN (67 aa).

Belongs to the heat shock protein 90 family. Homodimer.

It localises to the cytoplasm. Molecular chaperone. Has ATPase activity. This Vesicomyosocius okutanii subsp. Calyptogena okutanii (strain HA) protein is Chaperone protein HtpG.